Reading from the N-terminus, the 614-residue chain is uncharacterized protein (614 aa).

4 helical membrane-spanning segments follow: residues 41-61 (GWIFLLAILTVGTGVMEAVLF), 87-107 (LIGMAALLLISIVWGFLASAV), 157-177 (DTVLTLANMFVYVLVYFITSG), and 178-198 (VVLVALDSWFLLPFITWIILF). An ABC transmembrane type-1 domain is found at 43-330 (IFLLAILTVG…IMWESARLFE (288 aa)). In terms of domain architecture, ABC transporter spans 364–603 (IKFNDITFAY…NGLYAKLWNH (240 aa)). An ATP-binding site is contributed by 397–404 (GRSGAGKS).

It belongs to the ABC transporter superfamily.

The protein localises to the cell membrane. This is an uncharacterized protein from Haemophilus influenzae (strain ATCC 51907 / DSM 11121 / KW20 / Rd).